An 819-amino-acid chain; its full sequence is Pentatricopeptide repeat-containing protein At5g02860 (819 aa).

A disordered region spans residues 57 to 93 (QNPNSRQPISSQTSRNRNRTRIGKSRDPNLGKPWSYH). PPR repeat units lie at residues 172-206 (DNSVVAIIISMLGKEGRVSSAANMFNGLQEDGFSL), 207-241 (DVYSYTSLISAFANSGRYREAVNVFKKMEEDGCKP), 242-277 (TLITYNVILNVFGKMGTPWNKITSLVEKMKSDGIAP), 278-312 (DAYTYNTLITCCKRGSLHQEAAQVFEEMKAAGFSY), 313-347 (DKVTYNALLDVYGKSHRPKEAMKVLNEMVLNGFSP), 348-382 (SIVTYNSLISAYARDGMLDEAMELKNQMAEKGTKP), 383-417 (DVFTYTTLLSGFERAGKVESAMSIFEEMRNAGCKP), 418-452 (NICTFNAFIKMYGNRGKFTEMMKIFDEINVCGLSP), 453-487 (DIVTWNTLLAVFGQNGMDSEVSGVFKEMKRAGFVP), 488-522 (ERETFNTLISAYSRCGSFEQAMTVYRRMLDAGVTP), 523-557 (DLSTYNTVLAALARGGMWEQSEKVLAEMEDGRCKP), 558-592 (NELTYCSLLHAYANGKEIGLMHSLAEEVYSGVIEP), 593-627 (RAVLLKTLVLVCSKCDLLPEAERAFSELKERGFSP), 628-662 (DITTLNSMVSIYGRRQMVAKANGVLDYMKERGFTP), 663-697 (SMATYNSLMYMHSRSADFGKSEEILREILAKGIKP), 698-732 (DIISYNTVIYAYCRNTRMRDASRIFSEMRNSGIVP), 733-767 (DVITYNTFIGSYAADSMFEEAIGVVRYMIKHGCRP), and 768-802 (NQNTYNSIVDGYCKLNRKDEAKLFVEDLRNLDPHA).

It belongs to the PPR family. P subfamily.

This chain is Pentatricopeptide repeat-containing protein At5g02860, found in Arabidopsis thaliana (Mouse-ear cress).